A 477-amino-acid chain; its full sequence is Cysteine--tRNA ligase (477 aa).

C28 is a binding site for Zn(2+). The short motif at P30 to N40 is the 'HIGH' region element. The Zn(2+) site is built by C213, H238, and E242. Residues K270 to S274 carry the 'KMSKS' region motif. ATP is bound at residue K273.

It belongs to the class-I aminoacyl-tRNA synthetase family. As to quaternary structure, monomer. The cofactor is Zn(2+).

It is found in the cytoplasm. The catalysed reaction is tRNA(Cys) + L-cysteine + ATP = L-cysteinyl-tRNA(Cys) + AMP + diphosphate. This is Cysteine--tRNA ligase (cysS) from Chlamydia trachomatis serovar D (strain ATCC VR-885 / DSM 19411 / UW-3/Cx).